A 371-amino-acid chain; its full sequence is Probable G protein-coupled receptor 85 (371 aa).

At 1-26 (MANYSHAGDHNILQNVSPLATFLKLT) the chain is on the extracellular side. A glycan (N-linked (GlcNAc...) asparagine) is linked at N3. The chain crosses the membrane as a helical span at residues 27 to 47 (SLGFIIGVGVVGNLLISILLV). Over 48-58 (KDKSLHRAPYY) the chain is Cytoplasmic. The chain crosses the membrane as a helical span at residues 59–79 (FLLDLCASDILRSAICFPFVF). Residues 80–96 (TSVKNGSAWTYGTLTCK) lie on the Extracellular side of the membrane. Residue N84 is glycosylated (N-linked (GlcNAc...) asparagine). C95 and C173 are joined by a disulfide. A helical transmembrane segment spans residues 97–117 (VIAFLGVLSCFHTAFMLFCVS). Residues 118–138 (VTRYLAIAHHRFYTKRLTFWT) lie on the Cytoplasmic side of the membrane. Residues 139–159 (CLAVICMVWTLSVAMAFPPVL) form a helical membrane-spanning segment. At 160–189 (DVGTYSFIREEDQCTFQHRSFRANDSLGFM) the chain is on the extracellular side. A glycan (N-linked (GlcNAc...) asparagine) is linked at N183. Residues 190–210 (LLLALILLATQLVYLKLIFFV) form a helical membrane-spanning segment. At 211-287 (HDRRKMKPVQ…FKTEKRISRM (77 aa)) the chain is on the cytoplasmic side. Residues 288–308 (FYIITFFFLSLWGPYLVACYW) form a helical membrane-spanning segment. The Extracellular portion of the chain corresponds to 309–321 (RVFARGPVIPGGY). Residues 322-342 (LTAAVWMSFAQAGVNPFICIF) form a helical membrane-spanning segment. Residues 343–371 (SNRELRRCFSTTLLYCRKSRLPREPYCVI) lie on the Cytoplasmic side of the membrane.

The protein belongs to the G-protein coupled receptor 1 family.

It localises to the cell membrane. Functionally, orphan receptor. This chain is Probable G protein-coupled receptor 85 (gpr85), found in Danio rerio (Zebrafish).